We begin with the raw amino-acid sequence, 210 residues long: Holliday junction branch migration complex subunit RuvA (210 aa).

The tract at residues 1–70 (MISYLKGNPI…DEQPILYGFA (70 aa)) is domain I. A domain II region spans residues 71 to 149 (TAAERELFRQ…QWRKLVGITL (79 aa)). The interval 150–160 (PSTSAIPSLEV) is flexible linker. Positions 160–210 (VLEDVEMTLLALGYTNEEINKAISTLSQDNQMLKNTNSEEWIREAIAWLSQ) are domain III.

Belongs to the RuvA family. In terms of assembly, homotetramer. Forms an RuvA(8)-RuvB(12)-Holliday junction (HJ) complex. HJ DNA is sandwiched between 2 RuvA tetramers; dsDNA enters through RuvA and exits via RuvB. An RuvB hexamer assembles on each DNA strand where it exits the tetramer. Each RuvB hexamer is contacted by two RuvA subunits (via domain III) on 2 adjacent RuvB subunits; this complex drives branch migration. In the full resolvosome a probable DNA-RuvA(4)-RuvB(12)-RuvC(2) complex forms which resolves the HJ.

It localises to the cytoplasm. Its function is as follows. The RuvA-RuvB-RuvC complex processes Holliday junction (HJ) DNA during genetic recombination and DNA repair, while the RuvA-RuvB complex plays an important role in the rescue of blocked DNA replication forks via replication fork reversal (RFR). RuvA specifically binds to HJ cruciform DNA, conferring on it an open structure. The RuvB hexamer acts as an ATP-dependent pump, pulling dsDNA into and through the RuvAB complex. HJ branch migration allows RuvC to scan DNA until it finds its consensus sequence, where it cleaves and resolves the cruciform DNA. This Rippkaea orientalis (strain PCC 8801 / RF-1) (Cyanothece sp. (strain PCC 8801)) protein is Holliday junction branch migration complex subunit RuvA.